We begin with the raw amino-acid sequence, 566 residues long: Arginine--tRNA ligase (566 aa).

Residues 123–133 (PNIAKPFHIGH) carry the 'HIGH' region motif.

Belongs to the class-I aminoacyl-tRNA synthetase family. In terms of assembly, monomer.

It localises to the cytoplasm. It catalyses the reaction tRNA(Arg) + L-arginine + ATP = L-arginyl-tRNA(Arg) + AMP + diphosphate. This Halothermothrix orenii (strain H 168 / OCM 544 / DSM 9562) protein is Arginine--tRNA ligase.